Consider the following 1172-residue polypeptide: DNA-directed RNA polymerase subunit beta (1172 aa).

It belongs to the RNA polymerase beta chain family. In terms of assembly, the RNAP catalytic core consists of 2 alpha, 1 beta, 1 beta' and 1 omega subunit. When a sigma factor is associated with the core the holoenzyme is formed, which can initiate transcription.

It carries out the reaction RNA(n) + a ribonucleoside 5'-triphosphate = RNA(n+1) + diphosphate. In terms of biological role, DNA-dependent RNA polymerase catalyzes the transcription of DNA into RNA using the four ribonucleoside triphosphates as substrates. This is DNA-directed RNA polymerase subunit beta from Mycobacterium sp. (strain JLS).